Reading from the N-terminus, the 118-residue chain is Small ribosomal subunit protein uS13 (118 aa).

The interval 94 to 118 is disordered; the sequence is SLPVRGQRSKTNARTRKGPRKAIKK.

The protein belongs to the universal ribosomal protein uS13 family. In terms of assembly, part of the 30S ribosomal subunit. Forms a loose heterodimer with protein S19. Forms two bridges to the 50S subunit in the 70S ribosome.

In terms of biological role, located at the top of the head of the 30S subunit, it contacts several helices of the 16S rRNA. In the 70S ribosome it contacts the 23S rRNA (bridge B1a) and protein L5 of the 50S subunit (bridge B1b), connecting the 2 subunits; these bridges are implicated in subunit movement. Contacts the tRNAs in the A and P-sites. The polypeptide is Small ribosomal subunit protein uS13 (Psychromonas ingrahamii (strain DSM 17664 / CCUG 51855 / 37)).